Reading from the N-terminus, the 271-residue chain is Putative mitochondrial carrier protein PET8 (271 aa).

Solcar repeat units lie at residues 3 to 76 (STFL…MKQQ), 91 to 177 (AEVL…LKKK), and 187 to 270 (VSAW…VHSL). 6 consecutive transmembrane segments (helical) span residues 6–26 (LASL…FFPI), 51–71 (GLGS…VTYD), 97–117 (MLSS…AEVI), 152–168 (GWWT…CIQF), 193–213 (AVCG…LDVL), and 251–271 (MWIS…HSLF).

It belongs to the mitochondrial carrier (TC 2.A.29) family.

It is found in the mitochondrion inner membrane. This chain is Putative mitochondrial carrier protein PET8 (PET8), found in Eremothecium gossypii (strain ATCC 10895 / CBS 109.51 / FGSC 9923 / NRRL Y-1056) (Yeast).